The primary structure comprises 295 residues: Ribosomal RNA small subunit methyltransferase A (295 aa).

S-adenosyl-L-methionine-binding residues include asparagine 29, leucine 31, glycine 56, glutamate 77, aspartate 102, and asparagine 128.

The protein belongs to the class I-like SAM-binding methyltransferase superfamily. rRNA adenine N(6)-methyltransferase family. RsmA subfamily.

It localises to the cytoplasm. It carries out the reaction adenosine(1518)/adenosine(1519) in 16S rRNA + 4 S-adenosyl-L-methionine = N(6)-dimethyladenosine(1518)/N(6)-dimethyladenosine(1519) in 16S rRNA + 4 S-adenosyl-L-homocysteine + 4 H(+). Its function is as follows. Specifically dimethylates two adjacent adenosines (A1518 and A1519) in the loop of a conserved hairpin near the 3'-end of 16S rRNA in the 30S particle. May play a critical role in biogenesis of 30S subunits. This Listeria monocytogenes serovar 1/2a (strain ATCC BAA-679 / EGD-e) protein is Ribosomal RNA small subunit methyltransferase A.